A 345-amino-acid polypeptide reads, in one-letter code: Nuclear distribution protein nudE-like 1 (345 aa).

The stretch at 27–190 (KQTFQEARDE…LAVRERQQEV (164 aa)) forms a coiled coil. The self-association stretch occupies residues 56–166 (VQAEQRNRDL…LDEKESLLVS (111 aa)). The interval 64–189 (DLQADNQRLK…ELAVRERQQE (126 aa)) is interaction with KATNB1. The segment at 114-133 (YVRELEQANDDLERAKRATI) is required for interaction with PAFAH1B1. The segment at 175-345 (RDLRQELAVR…SAPGMLPLSV (171 aa)) is interaction with CENPF. The interaction with YWHAE stretch occupies residues 189–256 (EVTRKSAPSS…SARISALNIV (68 aa)). Residues 191–345 (TRKSAPSSPT…SAPGMLPLSV (155 aa)) form an interaction with NEFL region. The tract at residues 195–256 (APSSPTLDCE…SARISALNIV (62 aa)) is interaction with KATNA1. Residue Ser-215 is modified to Phosphoserine. The segment at 217 to 240 (PATPVGKGTENSFPSPKAIPNGFG) is disordered. Phosphothreonine; by CDK1 and MAPK1 is present on Thr-219. The interaction with DISC1 stretch occupies residues 227-278 (NSFPSPKAIPNGFGTSPLTPSARISALNIVGDLLRKVGALESKLAACRNFAK). Ser-231 bears the Phosphoserine mark. At Ser-242 the chain carries Phosphoserine; by CDK1. Thr-245 is subject to Phosphothreonine; by CDK1 and MAPK1. The interval 256–291 (VGDLLRKVGALESKLAACRNFAKDQASRKSYISGNV) is required for localization to the centrosome and interaction with dynein, dynactin, tubulin gamma, PCM1 and PCNT. The S-palmitoyl cysteine; by ZDHHC2, ZDHHC3 and ZDHHC7 moiety is linked to residue Cys-273. The segment at 316-345 (AVNGFDPAPPPPGLGSSRPLSAPGMLPLSV) is disordered. Over residues 329–339 (LGSSRPLSAPG) the composition is skewed to low complexity. Phosphoserine is present on Ser-344.

It belongs to the nudE family. In terms of assembly, self-associates. Interacts with DISC1, dynein, dynactin, tubulin gamma, KATNA1, KATNB1, microtubules, PAFAH1B1, PCM1, PCNT, and YWHAE. Interacts directly with NEFL and indirectly with NEFH. Interacts (via C-terminus) with CENPF. Interacts with ZNF365. Interacts with PLEKHM1 (via N- and C-terminus). Interacts with GTP-bound RAB9A; the interaction may lead to RAB9A-dynein motor tethering. Phosphorylated in mitosis. Can be phosphorylated by CDK1, CDK5 and MAPK1. Phosphorylation by CDK5 promotes interaction with KATNA1 and YWHAE. Post-translationally, palmitoylation at Cys-273 reduces affinity for dynein. In terms of tissue distribution, expressed at low levels in heart, hypothalamus, liver, lung, spleen and stomach. Expressed at higher levels in testis and brain. Within the brain, expressed in cerebellum, cerebral stem, cortex and striatum.

The protein resides in the cytoplasm. The protein localises to the cytoskeleton. It localises to the microtubule organizing center. It is found in the centrosome. Its subcellular location is the chromosome. The protein resides in the centromere. The protein localises to the kinetochore. It localises to the spindle. Required for organization of the cellular microtubule array and microtubule anchoring at the centrosome. May regulate microtubule organization at least in part by targeting the microtubule severing protein KATNA1 to the centrosome. Also positively regulates the activity of the minus-end directed microtubule motor protein dynein. May enhance dynein-mediated microtubule sliding by targeting dynein to the microtubule plus ends. Required for several dynein- and microtubule-dependent processes such as the maintenance of Golgi integrity, the centripetal motion of secretory vesicles and the coupling of the nucleus and centrosome. Also required during brain development for the migration of newly formed neurons from the ventricular/subventricular zone toward the cortical plate. Plays a role, together with DISC1, in the regulation of neurite outgrowth. Required for mitosis in some cell types but appears to be dispensible for mitosis in cortical neuronal progenitors, which instead requires NDE1. Facilitates the polymerization of neurofilaments from the individual subunits NEFH and NEFL. Positively regulates lysosome peripheral distribution and ruffled border formation in osteoclasts. Plays a role, together with DISC1, in the regulation of neurite outgrowth. May act as a RAB9A/B effector that tethers RAB9-associated late endosomes to the dynein motor for their retrograde transport to the trans-Golgi network. The polypeptide is Nuclear distribution protein nudE-like 1 (NDEL1) (Oryctolagus cuniculus (Rabbit)).